Reading from the N-terminus, the 659-residue chain is mRNA export factor ICP27 homolog (659 aa).

Zn(2+) is bound by residues cysteine 130, histidine 266, cysteine 268, and cysteine 273. A CHC2-type zinc finger spans residues 130 to 273 (CMMSNGERPP…CEHACNDNAC (144 aa)). The tract at residues 317–659 (GSFDDSRSAT…GEDGESDMTL (343 aa)) is disordered. The segment covering 324–336 (SATSGDGSSCSSA) has biased composition (low complexity). A compositionally biased stretch (polar residues) spans 354-365 (SDQTDTSNNGTV). Basic and acidic residues predominate over residues 387–397 (SPLDRPNDYHY). The segment covering 413–427 (GSGSSSTEAVSTASA) has biased composition (low complexity). Residues 483–499 (SPERRSSEERSSSDQRR) are compositionally biased toward basic and acidic residues. Over residues 503-513 (LSRSASATSGG) the composition is skewed to polar residues. Positions 553–575 (SRSNTPPSSPSKPDSAPAASASP) are enriched in low complexity. A compositionally biased stretch (basic and acidic residues) spans 598–610 (ESVRVSERFETGD). Composition is skewed to acidic residues over residues 617-628 (ETEDESDDEDDQ) and 646-659 (SETD…DMTL).

It belongs to the HHV-1 ICP27 protein family.

It is found in the virion tegument. Its subcellular location is the virion. It localises to the host nucleus. The protein resides in the host cytoplasm. In terms of biological role, immediate early (EI) protein that plays many roles during productive infection including regulation of viral gene expression and nuclear export of intronless viral RNAs. This chain is mRNA export factor ICP27 homolog, found in Elephantid herpesvirus 1 (isolate Asian elephant/Berlin/Kiba/1998) (EIHV-1).